The sequence spans 249 residues: Probable septum site-determining protein MinC (249 aa).

Residues 89 to 130 (SLFEPGMPPAMKGGRPAPDFEVPEVDPADPPKAGKGKAAAPI) are disordered. Residues 119 to 129 (PKAGKGKAAAP) show a composition bias toward low complexity.

Belongs to the MinC family. Interacts with MinD and FtsZ.

Functionally, cell division inhibitor that blocks the formation of polar Z ring septums. Rapidly oscillates between the poles of the cell to destabilize FtsZ filaments that have formed before they mature into polar Z rings. Prevents FtsZ polymerization. The polypeptide is Probable septum site-determining protein MinC (Rhizobium meliloti (strain 1021) (Ensifer meliloti)).